The primary structure comprises 177 residues: Protein-export protein SecB (177 aa).

The tract at residues 1–22 (MSDENNSGAAAPEAQNPGQNAA) is disordered. The span at 8–22 (GAAAPEAQNPGQNAA) shows a compositional bias: low complexity.

This sequence belongs to the SecB family. As to quaternary structure, homotetramer, a dimer of dimers. One homotetramer interacts with 1 SecA dimer.

It localises to the cytoplasm. Its function is as follows. One of the proteins required for the normal export of preproteins out of the cell cytoplasm. It is a molecular chaperone that binds to a subset of precursor proteins, maintaining them in a translocation-competent state. It also specifically binds to its receptor SecA. This is Protein-export protein SecB from Paracoccus denitrificans (strain Pd 1222).